The primary structure comprises 428 residues: Probable anion transporter 6 (428 aa).

A signal peptide spans methionine 1–isoleucine 22. The next 11 membrane-spanning stretches (helical) occupy residues methionine 47–alanine 67, leucine 74–proline 94, isoleucine 98–isoleucine 118, leucine 137–valine 157, serine 164–alanine 184, isoleucine 221–leucine 241, leucine 269–isoleucine 289, lysine 301–phenylalanine 321, alanine 327–valine 347, phenylalanine 356–valine 376, and threonine 401–serine 421.

It belongs to the major facilitator superfamily. Sodium/anion cotransporter (TC 2.A.1.14) family.

It is found in the cell membrane. Probable anion transporter. The sequence is that of Probable anion transporter 6 (PHT4;6) from Oryza sativa subsp. japonica (Rice).